The primary structure comprises 300 residues: NAD kinase (300 aa).

Asp-75 (proton acceptor) is an active-site residue. NAD(+) contacts are provided by residues 75–76 (DG), 149–150 (ND), Arg-177, Asp-179, 190–195 (TAYALS), Ala-214, and Gln-248.

The protein belongs to the NAD kinase family. A divalent metal cation serves as cofactor.

It is found in the cytoplasm. It catalyses the reaction NAD(+) + ATP = ADP + NADP(+) + H(+). In terms of biological role, involved in the regulation of the intracellular balance of NAD and NADP, and is a key enzyme in the biosynthesis of NADP. Catalyzes specifically the phosphorylation on 2'-hydroxyl of the adenosine moiety of NAD to yield NADP. The polypeptide is NAD kinase (Burkholderia pseudomallei (strain K96243)).